The chain runs to 668 residues: tRNA 5-methylaminomethyl-2-thiouridine biosynthesis bifunctional protein MnmC (668 aa).

Residues 1–245 (MKHYAIQPAN…KREMLCGVME (245 aa)) form a tRNA (mnm(5)s(2)U34)-methyltransferase region. Positions 270 to 668 (IGGGIASALL…LLKGKAVKAG (399 aa)) are FAD-dependent cmnm(5)s(2)U34 oxidoreductase.

It in the N-terminal section; belongs to the methyltransferase superfamily. tRNA (mnm(5)s(2)U34)-methyltransferase family. This sequence in the C-terminal section; belongs to the DAO family. It depends on FAD as a cofactor.

The protein localises to the cytoplasm. The enzyme catalyses 5-aminomethyl-2-thiouridine(34) in tRNA + S-adenosyl-L-methionine = 5-methylaminomethyl-2-thiouridine(34) in tRNA + S-adenosyl-L-homocysteine + H(+). Functionally, catalyzes the last two steps in the biosynthesis of 5-methylaminomethyl-2-thiouridine (mnm(5)s(2)U) at the wobble position (U34) in tRNA. Catalyzes the FAD-dependent demodification of cmnm(5)s(2)U34 to nm(5)s(2)U34, followed by the transfer of a methyl group from S-adenosyl-L-methionine to nm(5)s(2)U34, to form mnm(5)s(2)U34. This is tRNA 5-methylaminomethyl-2-thiouridine biosynthesis bifunctional protein MnmC from Escherichia coli (strain SMS-3-5 / SECEC).